A 391-amino-acid chain; its full sequence is Phosphoglycerate kinase (391 aa).

Substrate contacts are provided by residues 21–23 (DLN), R36, 59–62 (HLGR), R113, and R146. Residues K197, E319, and 345 to 348 (GGDT) contribute to the ATP site.

This sequence belongs to the phosphoglycerate kinase family. Monomer.

Its subcellular location is the cytoplasm. The catalysed reaction is (2R)-3-phosphoglycerate + ATP = (2R)-3-phospho-glyceroyl phosphate + ADP. Its pathway is carbohydrate degradation; glycolysis; pyruvate from D-glyceraldehyde 3-phosphate: step 2/5. The chain is Phosphoglycerate kinase from Pseudoalteromonas atlantica (strain T6c / ATCC BAA-1087).